We begin with the raw amino-acid sequence, 563 residues long: Probable ganciclovir kinase (563 aa).

The segment covering M1 to I16 has biased composition (polar residues). The tract at residues M1–K33 is disordered. ATP contacts are provided by residues L202–V210 and K219. Catalysis depends on D314, which acts as the Proton acceptor.

Belongs to the protein kinase superfamily. Tyr protein kinase family. HCMV ganciclovir subfamily.

Phosphorylates the antiviral nucleoside analog ganciclovir. In Human herpesvirus 6B (strain Z29) (HHV-6 variant B), this protein is Probable ganciclovir kinase (U69).